The following is a 360-amino-acid chain: MAKPKFIALALVALSFLSIAQSIPFTEKDLASEDSLWNLYEKWRTHHTVARDLDEKNRRFNVFKENVKFIHEFNQKKDAPYKLALNKFGDMTNQEFRSKYAGSKIQHHRSQRGIQKNTGSFMYENVGSLPAASIDWRAKGAVTGVKDQGQCGSCWAFSTIASVEGINQIKTGELVSLSEQELVDCDTSYNEGCNGGLMDYAFEFIQKNGITTEDSYPYAEQDGTCASNLLNSPVVSIDGHQDVPANNENALMQAVANQPISVSIEASGYGFQFYSEGVFTGRCGTELDHGVAIVGYGATRDGTKYWIVKNSWGEEWGESGYIRMQRGISDKRGKCGIAMEASYPIKTSANPKNSSTRDEL.

The signal sequence occupies residues Met1–Ala20. Positions Gln21–Ser133 are cleaved as a propeptide — activation peptide. Intrachain disulfides connect Cys151–Cys193, Cys185–Cys225, and Cys283–Cys335. Cys154 is an active-site residue. Residues His289 and Asn310 contribute to the active site. An N-linked (GlcNAc...) asparagine glycan is attached at Asn353. The short motif at Arg357–Leu360 is the Prevents secretion from ER element.

The protein belongs to the peptidase C1 family.

The protein resides in the endoplasmic reticulum lumen. The chain is Thiol protease SEN102 (SEN102) from Hemerocallis sp. (Daylily).